Reading from the N-terminus, the 200-residue chain is Imidazoleglycerol-phosphate dehydratase (200 aa).

The protein belongs to the imidazoleglycerol-phosphate dehydratase family.

It is found in the cytoplasm. The catalysed reaction is D-erythro-1-(imidazol-4-yl)glycerol 3-phosphate = 3-(imidazol-4-yl)-2-oxopropyl phosphate + H2O. Its pathway is amino-acid biosynthesis; L-histidine biosynthesis; L-histidine from 5-phospho-alpha-D-ribose 1-diphosphate: step 6/9. This Chlorobium luteolum (strain DSM 273 / BCRC 81028 / 2530) (Pelodictyon luteolum) protein is Imidazoleglycerol-phosphate dehydratase.